The following is a 452-amino-acid chain: Growth/differentiation factor 6 (452 aa).

Residues 1–22 (MDTPRVLLWAIFLISFLWDLPG) form the signal peptide. A propeptide spanning residues 23–332 (FQQASISSSS…LPSPGRRRRR (310 aa)) is cleaved from the precursor. Residues 29–93 (SSSSSTELDS…QEPPGRGPRV (65 aa)) are disordered. Composition is skewed to basic and acidic residues over residues 37-46 (DSTKDVENRK) and 58-75 (AEGR…ELRR). N-linked (GlcNAc...) asparagine glycosylation occurs at Asn115. Disordered stretches follow at residues 244–267 (RDSG…LGFG) and 301–348 (AEAA…KKSR). The span at 301–317 (AEAAGAEGSWPAPSGAP) shows a compositional bias: low complexity. Basic residues predominate over residues 327-348 (GRRRRRTALSSRHGKRHGKKSR). Cystine bridges form between Cys351–Cys417, Cys380–Cys449, and Cys384–Cys451.

It belongs to the TGF-beta family. Homodimer; disulfide-linked.

The protein localises to the secreted. In terms of biological role, growth factor that controls proliferation and cellular differentiation in the retina and bone formation. Plays a key role in regulating apoptosis during retinal development. Establishes dorsal-ventral positional information in the retina and controls the formation of the retinotectal map. Required for normal formation of bones and joints in the limbs, skull, digits and axial skeleton. Plays a key role in establishing boundaries between skeletal elements during development. Regulation of GDF6 expression seems to be a mechanism for evolving species-specific changes in skeletal structures. Seems to positively regulate differentiation of chondrogenic tissue through the growth factor receptors subunits BMPR1A, BMPR1B, BMPR2 and ACVR2A, leading to the activation of SMAD1-SMAD5-SMAD8 complex. The regulation of chondrogenic differentiation is inhibited by NOG. Also involved in the induction of adipogenesis from mesenchymal stem cells. This mechanism acts through the growth factor receptors subunits BMPR1A, BMPR2 and ACVR2A and the activation of SMAD1-SMAD5-SMAD8 complex and MAPK14/p38. This chain is Growth/differentiation factor 6 (Gdf6), found in Rattus norvegicus (Rat).